The primary structure comprises 354 residues: Serine/threonine-protein kinase ppk34 (354 aa).

The 292-residue stretch at 40-331 folds into the Protein kinase domain; the sequence is YRLKNMLGYG…IEELLRDPFL (292 aa). ATP contacts are provided by residues 46–54 and Lys69; that span reads LGYGACSTV. Asp200 serves as the catalytic Proton acceptor.

This sequence belongs to the protein kinase superfamily. Ser/Thr protein kinase family.

Its subcellular location is the cytoplasm. It localises to the nucleus. It catalyses the reaction L-seryl-[protein] + ATP = O-phospho-L-seryl-[protein] + ADP + H(+). The catalysed reaction is L-threonyl-[protein] + ATP = O-phospho-L-threonyl-[protein] + ADP + H(+). The chain is Serine/threonine-protein kinase ppk34 (ppk34) from Schizosaccharomyces pombe (strain 972 / ATCC 24843) (Fission yeast).